The following is a 547-amino-acid chain: Phospholipase DDHD1 (547 aa).

Ser-184 is a catalytic residue. A DDHD domain is found at Leu-258–Lys-533. At Ser-370 the chain carries Phosphoserine. The segment at Arg-414–Leu-448 is disordered. The span at Pro-423–Pro-434 shows a compositional bias: basic and acidic residues. Residues Ser-435–Leu-448 are compositionally biased toward low complexity.

Belongs to the PA-PLA1 family. In terms of assembly, forms homooligomers and, to a much smaller extent, heterooligomers with DDHD2. Interacts with SEC23A and SEC24C. In terms of tissue distribution, predominantly expressed in testis, in round and elongating spermatids, but not in spermatocytes (at protein level). Also expressed in the brain, and at lower levels in other tissues such as thymus and lung (at protein level).

The protein localises to the cytoplasm. It catalyses the reaction a 1,2-diacyl-sn-glycero-3-phosphate + H2O = a 2-acyl-sn-glycerol 3-phosphate + a fatty acid + H(+). It carries out the reaction a 1,2-diacyl-sn-glycero-3-phospho-(1D-myo-inositol) + H2O = a 2-acyl-sn-glycero-3-phospho-D-myo-inositol + a fatty acid + H(+). The enzyme catalyses 1-octadecanoyl-2-(5Z,8Z,11Z,14Z-eicosatetraenoyl)-sn-glycero-3-phospho-(1D-myo-inositol) + H2O = 2-(5Z,8Z,11Z,14Z-eicosatetraenoyl)-sn-glycero-3-phospho-(1D-myo-inositol) + octadecanoate + H(+). The catalysed reaction is a 1-acyl-2-(5Z,8Z,11Z,14Z-eicosatetraenoyl)-sn-glycero-3-phospho-(1D-myo-inositol) + H2O = 2-(5Z,8Z,11Z,14Z-eicosatetraenoyl)-sn-glycero-3-phospho-(1D-myo-inositol) + a fatty acid + H(+). It catalyses the reaction 1,2-dihexadecanoyl-sn-glycero-3-phospho-(1D-myo-inositol) + H2O = 2-hexadecanoyl-sn-glycero-3-phospho-(1D-myo-inositol) + hexadecanoate + H(+). It carries out the reaction a 1-acyl-2-(5Z,8Z,11Z,14Z)-eicosatetraenoyl-sn-glycero-3-phosphate + H2O = 2-(5Z,8Z,11Z,14Z-eicosatetraenoyl)-sn-glycero-3-phosphate + a fatty acid + H(+). The enzyme catalyses 1-(9Z-octadecenoyl)-2-(7Z,10Z,13Z,16Z,19Z-docosapentaenoyl)-sn-glycero-3-phospho-1D-myo-inositol + H2O = 2-(7Z,10Z,13Z,16Z,19Z-docosapentaenoyl)-sn-glycero-3-phospho-1D-myo-inositol + (9Z)-octadecenoate + H(+). The catalysed reaction is 1-(9Z-octadecenoyl)-2-(5Z,8Z,11Z,14Z-eicosatetraenoyl)-sn-glycero-3-phospho-1D-myo-inositol + H2O = 2-(5Z,8Z,11Z,14Z-eicosatetraenoyl)-sn-glycero-3-phospho-(1D-myo-inositol) + (9Z)-octadecenoate + H(+). It catalyses the reaction 1,2-di-(9Z-octadecenoyl)-sn-glycero-3-phospho-1D-myo-inositol + H2O = 2-(9Z-octadecenoyl)-sn-glycero-3-phospho-1D-myo-inositol + (9Z)-octadecenoate + H(+). It carries out the reaction 1-(9Z-octadecenoyl)-2-(8Z,11Z,14Z-eicosatrienoyl)-sn-glycero-3-phospho-1D-myo-inositol + H2O = 2-(8Z,11Z,14Z-eicosatrienoyl)-sn-glycero-3-phospho-1D-myo-inositol + (9Z)-octadecenoate + H(+). The enzyme catalyses 1,2-di-(9Z-octadecenoyl)-sn-glycero-3-phosphate + H2O = 2-(9Z-octadecenoyl)-sn-glycero-3-phosphate + (9Z)-octadecenoate + H(+). The catalysed reaction is 1-hexadecanoyl-2-(9Z-octadecenoyl)-sn-glycero-3-phosphate + H2O = 2-(9Z-octadecenoyl)-sn-glycero-3-phosphate + hexadecanoate + H(+). It catalyses the reaction 1-hexadecanoyl-2-(9Z-octadecenoyl)-sn-glycero-3-phospho-L-serine + H2O = 2-(9Z-octadecenoyl)-sn-glycero-3-phospho-L-serine + hexadecanoate + H(+). It carries out the reaction 1,2-di-(5Z,8Z,11Z,14Z)-eicosatetraenoyl-sn-glycero-3-phosphate + H2O = 2-(5Z,8Z,11Z,14Z-eicosatetraenoyl)-sn-glycero-3-phosphate + (5Z,8Z,11Z,14Z)-eicosatetraenoate + H(+). The enzyme catalyses 1-octadecanoyl-2-(5Z,8Z,11Z,14Z-eicosatetraenoyl)-sn-glycero-3-phosphate + H2O = 2-(5Z,8Z,11Z,14Z-eicosatetraenoyl)-sn-glycero-3-phosphate + octadecanoate + H(+). The catalysed reaction is a 1,2-diacyl-sn-glycero-3-phospho-L-serine + H2O = a 2-acyl-sn-glycero-3-phospho-L-serine + a fatty acid + H(+). It catalyses the reaction a 1,2-diacyl-sn-glycero-3-phosphocholine + H2O = a 2-acyl-sn-glycero-3-phosphocholine + a fatty acid + H(+). It carries out the reaction 1,2-di-(9Z-octadecenoyl)-sn-glycero-3-phosphocholine + H2O = (9Z-octadecenoyl)-sn-glycero-3-phosphocholine + (9Z)-octadecenoate + H(+). The enzyme catalyses a 1,2-diacyl-sn-glycero-3-phosphoethanolamine + H2O = a 2-acyl-sn-glycero-3-phosphoethanolamine + a fatty acid + H(+). The catalysed reaction is a 1,2-diacyl-sn-glycero-3-phospho-(1'-sn-glycerol) + H2O = 2-acyl-sn-glycero-3-phospho-(1'-sn-glycerol) + a fatty acid + H(+). It catalyses the reaction 1-hexadecanoyl-2-(9Z-octadecenoyl)-sn-glycero-3-phospho-(1'-sn-glycerol) + H2O = 2-(9Z-octadecenoyl)-sn-glycero-3-phospho-(1'-sn-glycerol) + hexadecanoate + H(+). It carries out the reaction 1-acyl-2-(5Z,8Z,11Z,14Z-eicosatetraenoyl)-sn-glycero-3-phosphocholine + H2O = 2-(5Z,8Z,11Z,14Z)-eicosatetraenoyl-sn-glycero-3-phosphocholine + a fatty acid + H(+). The enzyme catalyses 1-acyl-2-(5Z,8Z,11Z,14Z)-eicosatetraenoyl-sn-glycero-3-phosphoethanolamine + H2O = 2-(5Z,8Z,11Z,14Z)-eicosatetraenoyl-sn-glycero-3-phosphoethanolamine + a fatty acid + H(+). It participates in phospholipid metabolism; phosphatidylinositol metabolism. Functionally, phospholipase A1 (PLA1) that hydrolyzes ester bonds at the sn-1 position of glycerophospholipids producing a free fatty acid and a lysophospholipid. Prefers phosphatidate (1,2-diacyl-sn-glycero-3-phosphate, PA) as substrate in vitro, but can efficiently hydrolyze phosphatidylinositol (1,2-diacyl-sn-glycero-3-phospho-(1D-myo-inositol), PI), as well as a range of other glycerophospholipid substrates such as phosphatidylcholine (1,2-diacyl-sn-glycero-3-phosphocholine, PC), phosphatidylethanolamine (1,2-diacyl-sn-glycero-3-phosphoethanolamine, PE), phosphatidylserine (1,2-diacyl-sn-glycero-3-phospho-L-serine, PS) and phosphatidylglycerol (1,2-diacyl-sn-glycero-3-phospho-(1'-sn-glycerol), PG). Involved in the regulation of the endogenous content of polyunsaturated PI and PS lipids in the nervous system. Changes in these lipids extend to downstream metabolic products like PI phosphates PIP and PIP2, which play fundamental roles in cell biology. Regulates mitochondrial morphology. These dynamic changes may be due to PA hydrolysis at the mitochondrial surface. May play a regulatory role in spermatogenesis or sperm function. The sequence is that of Phospholipase DDHD1 from Mus musculus (Mouse).